The primary structure comprises 407 residues: SERPINE1 mRNA-binding protein 1 (407 aa).

S25 is modified (phosphoserine). The tract at residues 33–227 (AAENKKKEAG…GSGSHNWGTV (195 aa)) is disordered. The span at 51 to 68 (AKSAAQAAAQTNSNAAGK) shows a compositional bias: low complexity. Residue K52 is modified to N6-acetyllysine; alternate. Residue K52 forms a Glycyl lysine isopeptide (Lys-Gly) (interchain with G-Cter in SUMO1); alternate linkage. K68 is subject to N6-acetyllysine. 3 stretches are compositionally biased toward basic and acidic residues: residues 70–80 (LRKESQKDRKN), 89–114 (ADKKEETQPPVALKKEGIRRVGRRPD), and 122–162 (KLID…ERPI). K102 is covalently cross-linked (Glycyl lysine isopeptide (Lys-Gly) (interchain with G-Cter in SUMO2)). 2 positions are modified to N6-acetyllysine: K122 and K140. The segment covering 164–182 (GRGGLGRGRGGRGRGMGRG) has biased composition (gly residues). Omega-N-methylarginine is present on residues R165 and R188. A compositionally biased stretch (basic and acidic residues) spans 183–199 (DGFDSRGKREFDRHSGS). Residues S197, S199, S203, S205, and S208 each carry the phosphoserine modification. At K211 the chain carries N6-acetyllysine; alternate. A Glycyl lysine isopeptide (Lys-Gly) (interchain with G-Cter in SUMO2); alternate cross-link involves residue K211. R216 carries the omega-N-methylarginine modification. Position 221 is a phosphoserine (S221). Position 226 is a phosphothreonine (T226). Residue K228 forms a Glycyl lysine isopeptide (Lys-Gly) (interchain with G-Cter in SUMO1); alternate linkage. K228 participates in a covalent cross-link: Glycyl lysine isopeptide (Lys-Gly) (interchain with G-Cter in SUMO2); alternate. 3 positions are modified to phosphoserine: L231, S234, and Y237. At S234 the chain carries Phosphothreonine. K240 carries the phosphothreonine modification. A compositionally biased stretch (polar residues) spans 242–256 (ISYNCSDLDQSNVTE). Disordered stretches follow at residues 242-288 (ISYN…KEMT) and 327-407 (SKSE…PALA). The span at 261-274 (GEEHPVADTENKEN) shows a compositional bias: basic and acidic residues. K280 participates in a covalent cross-link: Glycyl lysine isopeptide (Lys-Gly) (interchain with G-Cter in SUMO2). The span at 327–341 (SKSEEAHAEDSVMDH) shows a compositional bias: basic and acidic residues. Position 328 is an N6-acetyllysine (K328). S329 bears the Phosphoserine mark. The span at 362-371 (GRPGRGGRGG) shows a compositional bias: gly residues. 3 positions are modified to omega-N-methylarginine: R363, R366, and R369. Phosphoserine is present on residues S391 and S393.

It belongs to the SERBP1-HABP4 family. In terms of assembly, associates with mature 80S ribosomes. Interacts with EEF2/eEF2; interaction sequesters EEF2/eEF2 at the A-site of the ribosome, thereby blocking the interaction sites of the mRNA-tRNA complex, promoting ribosome stabilization and hibernation. Interacts with SPIN1. Interacts with CHD3 and TDRD3. Interacts with ZDHHC17 (via ANK repeats). Phosphorylation by MTOR inhibits SERBP1 and relieves ribosome hibernation.

The protein localises to the cytoplasm. The protein resides in the nucleus. It localises to the perinuclear region. Functionally, ribosome-binding protein that promotes ribosome hibernation, a process during which ribosomes are stabilized in an inactive state and preserved from proteasomal degradation. Acts via its association with EEF2/eEF2 factor, sequestering EEF2/eEF2 at the A-site of the ribosome and promoting ribosome stabilization and storage in an inactive state. May also play a role in the regulation of mRNA stability: binds to the 3'-most 134 nt of the SERPINE1/PAI1 mRNA, a region which confers cyclic nucleotide regulation of message decay. Seems to play a role in PML-nuclear bodies formation. This Mus musculus (Mouse) protein is SERPINE1 mRNA-binding protein 1.